We begin with the raw amino-acid sequence, 894 residues long: DNA mismatch repair protein MutS (894 aa).

Residue 607-614 participates in ATP binding; it reads GPNMSGKS.

It belongs to the DNA mismatch repair MutS family.

This protein is involved in the repair of mismatches in DNA. It is possible that it carries out the mismatch recognition step. This protein has a weak ATPase activity. This Bacillus cereus (strain ZK / E33L) protein is DNA mismatch repair protein MutS.